The chain runs to 215 residues: UPF0502 protein YceH (215 aa).

Lysine 80 carries the post-translational modification N6-acetyllysine.

Belongs to the UPF0502 family.

This is UPF0502 protein YceH from Escherichia coli O45:K1 (strain S88 / ExPEC).